The chain runs to 511 residues: Bifunctional purine biosynthesis protein PurH (511 aa).

An MGS-like domain is found at 1-147; it reads MIQIKRALIS…KNYKHTLVLT (147 aa).

It belongs to the PurH family.

It catalyses the reaction (6R)-10-formyltetrahydrofolate + 5-amino-1-(5-phospho-beta-D-ribosyl)imidazole-4-carboxamide = 5-formamido-1-(5-phospho-D-ribosyl)imidazole-4-carboxamide + (6S)-5,6,7,8-tetrahydrofolate. The enzyme catalyses IMP + H2O = 5-formamido-1-(5-phospho-D-ribosyl)imidazole-4-carboxamide. It participates in purine metabolism; IMP biosynthesis via de novo pathway; 5-formamido-1-(5-phospho-D-ribosyl)imidazole-4-carboxamide from 5-amino-1-(5-phospho-D-ribosyl)imidazole-4-carboxamide (10-formyl THF route): step 1/1. Its pathway is purine metabolism; IMP biosynthesis via de novo pathway; IMP from 5-formamido-1-(5-phospho-D-ribosyl)imidazole-4-carboxamide: step 1/1. The chain is Bifunctional purine biosynthesis protein PurH from Leptospira interrogans serogroup Icterohaemorrhagiae serovar Lai (strain 56601).